We begin with the raw amino-acid sequence, 242 residues long: uncharacterized protein (242 aa).

Positions 198, 218, and 227 each coordinate S-adenosyl-L-methionine.

This sequence belongs to the class IV-like SAM-binding methyltransferase superfamily. RNA methyltransferase TrmH family.

This is an uncharacterized protein from Mycoplasma genitalium (strain ATCC 33530 / DSM 19775 / NCTC 10195 / G37) (Mycoplasmoides genitalium).